The sequence spans 152 residues: Ribosomal RNA large subunit methyltransferase H (152 aa).

Residues L70, G102, and 120 to 125 contribute to the S-adenosyl-L-methionine site; that span reads LSPMTF.

The protein belongs to the RNA methyltransferase RlmH family. In terms of assembly, homodimer.

It localises to the cytoplasm. The enzyme catalyses pseudouridine(1915) in 23S rRNA + S-adenosyl-L-methionine = N(3)-methylpseudouridine(1915) in 23S rRNA + S-adenosyl-L-homocysteine + H(+). Specifically methylates the pseudouridine at position 1915 (m3Psi1915) in 23S rRNA. In Pelobacter propionicus (strain DSM 2379 / NBRC 103807 / OttBd1), this protein is Ribosomal RNA large subunit methyltransferase H.